A 533-amino-acid polypeptide reads, in one-letter code: Receptor homology region, transmembrane domain- and RING domain-containing protein 1 (533 aa).

A signal peptide spans 1–26 (MNRRRTMLLLICLCATFCLMTQLGAA). Topologically, residues 27-167 (NVVLMGTNLT…LPAFENSAWS (141 aa)) are lumenal. Asn-34 is a glycosylation site (N-linked (GlcNAc...) asparagine). A disulfide bridge links Cys-68 with Cys-91. Residues 84–145 (ALIIRGGCTF…ISKASGEVLK (62 aa)) form the PA domain. Residues 168 to 188 (IMAISFISLLAMSAVLATCFF) traverse the membrane as a helical segment. The Cytoplasmic segment spans residues 189–533 (VRRHHIRRDR…MASAQSLPGC (345 aa)). Residues 236–278 (CAICLEDYNVGEKLRVLPCRHKFHAACVDLWLTTWRTFCPVCK) form an RING-type; atypical zinc finger. Disordered regions lie at residues 309 to 329 (SFRS…PSSQ) and 440 to 476 (LRRC…LAGA). Polar residues predominate over residues 448-463 (PSLSTMAPQSPQQSQL).

The protein resides in the prevacuolar compartment membrane. It localises to the protein storage vacuole membrane. Its subcellular location is the golgi apparatus membrane. Functionally, involved in the trafficking of vacuolar proteins. Functions probably as a sorting receptor for protein trafficking to the protein storage vacuole (PSV) by binding the C-terminal vacuolar sorting determinant (VSD) of vacuolar-sorted proteins. This Oryza sativa subsp. japonica (Rice) protein is Receptor homology region, transmembrane domain- and RING domain-containing protein 1.